Here is a 404-residue protein sequence, read N- to C-terminus: Ubiquitin-like modifier-activating enzyme 5 (404 aa).

5 residues coordinate ATP: Gly83, Asp104, Lys127, Asn150, and Asn184. Zn(2+) is bound by residues Cys226 and Cys229. Cys250 serves as the catalytic Glycyl thioester intermediate. 2 residues coordinate Zn(2+): Cys303 and Cys308. The tract at residues 372 to 393 (APEKSSETSEETVTAATADETS) is disordered. Residues 382-391 (ETVTAATADE) show a composition bias toward low complexity.

This sequence belongs to the ubiquitin-activating E1 family. UBA5 subfamily.

In terms of biological role, E1-like enzyme which activates UFM1. In Drosophila sechellia (Fruit fly), this protein is Ubiquitin-like modifier-activating enzyme 5.